The following is a 473-amino-acid chain: Argininosuccinate lyase (473 aa).

The protein belongs to the lyase 1 family. Argininosuccinate lyase subfamily.

It is found in the cytoplasm. It carries out the reaction 2-(N(omega)-L-arginino)succinate = fumarate + L-arginine. The protein operates within amino-acid biosynthesis; L-arginine biosynthesis; L-arginine from L-ornithine and carbamoyl phosphate: step 3/3. This chain is Argininosuccinate lyase, found in Nocardia farcinica (strain IFM 10152).